Reading from the N-terminus, the 301-residue chain is MIRVIEKGDKVSLPFSRGILTRSITSVGIDVDLAYSIAIEVQEELVKKGKTIVTKDEIRKLTYQKLIEKGFKEEAKRYIFWRRFRKMKVPLIILLGGPTGVGKSTIATELAFRLGIRSVIGTDSIREVLRKIITPELLPTIHTSTFLAWKELKGTVTDSPIVAGFESQVSAVTVGINAIIERAVREGLNAIIEGIHVVPGFVKVEGEMTFMYMLIARSREDLEARFYERTRYSKRPADYYISHLDEILEIQDYLIRRAKKFNVPVIENVELEETVSKIMEDIMQKTIEIMKGKGLDLLEEP.

The ATP-cone domain maps to 2 to 89 (IRVIEKGDKV…FWRRFRKMKV (88 aa)).

The protein belongs to the 2-phosphoglycerate kinase family. Requires a divalent metal cation as cofactor.

The enzyme catalyses (2R)-2-phosphoglycerate + ATP = (2R)-2,3-bisphosphoglycerate + ADP + H(+). It participates in thermoadapter biosynthesis; cyclic 2,3-diphosphoglycerate biosynthesis; cyclic 2,3-diphosphoglycerate from 2-phospho-D-glycerate: step 1/2. Catalyzes the phosphorylation of 2-phosphoglycerate to 2,3-diphosphoglycerate. Involved in the biosynthesis of cyclic 2,3-bisphosphoglycerate, a thermoprotectant. In Pyrococcus horikoshii (strain ATCC 700860 / DSM 12428 / JCM 9974 / NBRC 100139 / OT-3), this protein is 2-phosphoglycerate kinase.